Here is a 111-residue protein sequence, read N- to C-terminus: Large ribosomal subunit protein uL22 (111 aa).

The protein belongs to the universal ribosomal protein uL22 family. As to quaternary structure, part of the 50S ribosomal subunit.

Functionally, this protein binds specifically to 23S rRNA; its binding is stimulated by other ribosomal proteins, e.g. L4, L17, and L20. It is important during the early stages of 50S assembly. It makes multiple contacts with different domains of the 23S rRNA in the assembled 50S subunit and ribosome. The globular domain of the protein is located near the polypeptide exit tunnel on the outside of the subunit, while an extended beta-hairpin is found that lines the wall of the exit tunnel in the center of the 70S ribosome. The chain is Large ribosomal subunit protein uL22 from Chlamydia trachomatis serovar A (strain ATCC VR-571B / DSM 19440 / HAR-13).